A 935-amino-acid chain; its full sequence is Bifunctional alpha-galactosidase/sucrose kinase AgaSK (935 aa).

Residues 1 to 720 (MAIIYNPNKK…EAYQFAFTEL (720 aa)) form an alpha-galactosidase region. The Mg(2+) site is built by Glu-176, Glu-277, and Phe-280. Substrate contacts are provided by residues 366–367 (DD), Arg-443, 476–480 (KWDMN), and 518–521 (CSGG). Asp-526 functions as the Nucleophile in the catalytic mechanism. Asp-540 contacts substrate. The active-site Proton donor/acceptor is Glu-606. The tract at residues 721 to 935 (KEAGRLYEKV…VGKDGSVYEQ (215 aa)) is sucrose kinase. ATP is bound by residues 748–752 (GGSGS) and Ala-824.

In the N-terminal section; belongs to the glycosyl hydrolase 36 family. It in the C-terminal section; belongs to the uridine kinase family. Homotetramer. It depends on Mg(2+) as a cofactor.

It carries out the reaction Hydrolysis of terminal, non-reducing alpha-D-galactose residues in alpha-D-galactosides, including galactose oligosaccharides, galactomannans and galactolipids.. Bifunctional enzyme with alpha-galactosidase and sucrose kinase activities. Produces sucrose-6-phosphate directly from raffinose. Binds ATP. Phosphorylates sucrose specifically on the C6 position of glucose in the presence of ATP. Hydrolyzes melibiose, raffinose, stachyose and synthetic substrate p-nitrophenyl-alpha-D-galactopyranoside with high activity. Low activity against locust bean gum, guar gum and synthetic substrates xylose alpha-D-4-nitrophenol, glucose alpha-D-4-nitrophenol and o-nitrophenyl-alpha-D-galactopyranoside. This Mediterraneibacter gnavus (Ruminococcus gnavus) protein is Bifunctional alpha-galactosidase/sucrose kinase AgaSK.